Here is a 1713-residue protein sequence, read N- to C-terminus: Cell wall protein AWA1 (1713 aa).

A signal peptide spans 1 to 23 (MFNRFNKLQAALALVLYSQSALG). An N-linked (GlcNAc...) asparagine glycan is attached at N34. Disordered regions lie at residues 80-117 (IAPSTSSSEVSSSITSSGSSVSGSSSITSSGSSVSSSS), 256-327 (TSTT…AESI), and 359-939 (SSGI…STAS). The span at 256–275 (TSTTSDTYISSSSPSQVTSS) shows a compositional bias: low complexity. 2 stretches are compositionally biased toward polar residues: residues 276–327 (AEPT…AESI) and 359–368 (SSGISSSVEP). The segment covering 374–939 (PSSDESISST…QSTSSASTAS (566 aa)) has biased composition (low complexity). N-linked (GlcNAc...) asparagine glycosylation is found at N1133, N1241, and N1278. The segment at 1582–1603 (KTVTSEAPKETSETSETSAAPK) is disordered. A1692 carries the GPI-anchor amidated alanine lipid modification. Residues 1693-1713 (AGLNANTLNALVGIFVLAFFN) constitute a propeptide, removed in mature form.

Belongs to the SRP1/TIP1 family. Post-translationally, the GPI-anchor is attached to the protein in the endoplasmic reticulum and serves to target the protein to the cell surface. There, the glucosamine-inositol phospholipid moiety is cleaved off and the GPI-modified mannoprotein is covalently attached via its lipidless GPI glycan remnant to the 1,6-beta-glucan of the outer cell wall layer.

The protein localises to the secreted. The protein resides in the cell wall. It is found in the membrane. In terms of biological role, involved in cell wall organization and biosynthesis. Confers cell surface hydrophobicity (CSH). In Saccharomyces cerevisiae (strain Kyokai no. 7 / NBRC 101557) (Baker's yeast), this protein is Cell wall protein AWA1 (AWA1).